The sequence spans 239 residues: Small ribosomal subunit protein uS2 (239 aa).

It belongs to the universal ribosomal protein uS2 family.

In Francisella tularensis subsp. tularensis (strain WY96-3418), this protein is Small ribosomal subunit protein uS2.